Reading from the N-terminus, the 290-residue chain is Ribosomal protein L11 methyltransferase (290 aa).

S-adenosyl-L-methionine contacts are provided by Thr-136, Gly-159, Asp-181, and Asn-228.

It belongs to the methyltransferase superfamily. PrmA family.

Its subcellular location is the cytoplasm. The enzyme catalyses L-lysyl-[protein] + 3 S-adenosyl-L-methionine = N(6),N(6),N(6)-trimethyl-L-lysyl-[protein] + 3 S-adenosyl-L-homocysteine + 3 H(+). In terms of biological role, methylates ribosomal protein L11. This Allorhizobium ampelinum (strain ATCC BAA-846 / DSM 112012 / S4) (Agrobacterium vitis (strain S4)) protein is Ribosomal protein L11 methyltransferase.